A 117-amino-acid polypeptide reads, in one-letter code: Large ribosomal subunit protein bL20 (117 aa).

The protein belongs to the bacterial ribosomal protein bL20 family.

Binds directly to 23S ribosomal RNA and is necessary for the in vitro assembly process of the 50S ribosomal subunit. It is not involved in the protein synthesizing functions of that subunit. The chain is Large ribosomal subunit protein bL20 from Rickettsia massiliae (strain Mtu5).